Consider the following 141-residue polypeptide: ATP synthase epsilon chain (141 aa).

This sequence belongs to the ATPase epsilon chain family. F-type ATPases have 2 components, CF(1) - the catalytic core - and CF(0) - the membrane proton channel. CF(1) has five subunits: alpha(3), beta(3), gamma(1), delta(1), epsilon(1). CF(0) has three main subunits: a, b and c.

It localises to the cell membrane. Produces ATP from ADP in the presence of a proton gradient across the membrane. The protein is ATP synthase epsilon chain of Lactococcus lactis subsp. cremoris (strain SK11).